We begin with the raw amino-acid sequence, 821 residues long: Cation/H(+) antiporter 15 (821 aa).

The next 13 helical transmembrane spans lie at 37-57 (LPLF…FVFI), 65-82 (RVIS…SVLG), 97-117 (VMVL…LVGV), 131-151 (ALTI…AFSF), 166-186 (ILFL…RILA), 200-220 (MSAA…AIAL), 228-248 (FASL…VFVV), 268-288 (FHIC…DAIG), 292-312 (VFGA…LTLI), 318-338 (FVSG…TNIA), 350-370 (FLVI…VAFF), 378-398 (GITL…VLNV), and 410-430 (FATM…IVTI). The tract at residues 800–821 (DFPESPVHSHETKVTYGLENPR) is disordered.

This sequence belongs to the monovalent cation:proton antiporter 2 (CPA2) transporter (TC 2.A.37) family. CHX (TC 2.A.37.4) subfamily. As to expression, specifically expressed in pollen.

It localises to the membrane. Its function is as follows. May operate as a cation/H(+) antiporter. This is Cation/H(+) antiporter 15 (CHX15) from Arabidopsis thaliana (Mouse-ear cress).